The following is a 179-amino-acid chain: MKFLFDLFPVILFFVAFKLFGIYPATAVAIGATVVQIAWVHFRHGKAEPMQWVSLAIIAVFGGATILLHNETFIKWKPTVLYWLFAVTLIGSVIGWRKNLIRAMMEKQVTLPEPMWGRLNVAWAGFFAVMGVLNLYVAYQFSTDTWVNFKLFGSMGLMLVFIVAQSIWLSRHIQETPSE.

Helical transmembrane passes span 3-23, 49-69, 76-96, 121-141, and 149-169; these read FLFD…FGIY, PMQW…ILLH, WKPT…VIGW, VAWA…AYQF, and FKLF…SIWL.

The protein belongs to the YciB family.

The protein resides in the cell inner membrane. In terms of biological role, plays a role in cell envelope biogenesis, maintenance of cell envelope integrity and membrane homeostasis. In Cupriavidus metallidurans (strain ATCC 43123 / DSM 2839 / NBRC 102507 / CH34) (Ralstonia metallidurans), this protein is Inner membrane-spanning protein YciB.